A 252-amino-acid chain; its full sequence is Hydroxyacylglutathione hydrolase (252 aa).

His54, His56, Asp58, His59, His111, Asp128, and His166 together coordinate Zn(2+).

The protein belongs to the metallo-beta-lactamase superfamily. Glyoxalase II family. Monomer. It depends on Zn(2+) as a cofactor.

It catalyses the reaction an S-(2-hydroxyacyl)glutathione + H2O = a 2-hydroxy carboxylate + glutathione + H(+). Its pathway is secondary metabolite metabolism; methylglyoxal degradation; (R)-lactate from methylglyoxal: step 2/2. Its function is as follows. Thiolesterase that catalyzes the hydrolysis of S-D-lactoyl-glutathione to form glutathione and D-lactic acid. The sequence is that of Hydroxyacylglutathione hydrolase from Vibrio campbellii (strain ATCC BAA-1116).